The sequence spans 246 residues: Homeobox protein SIX6 (246 aa).

A DNA-binding region (homeobox) is located at residues 128-187; it reads GEQKTHCFKERTRHLLREWYLQDPYPNPSKKRELAQATGLTPTQVGNWFKNRRQRDRAAA. The disordered stretch occupies residues 190–246; that stretch reads NRLQQQVLSQGSGRALRAEGDGTPEVLGVATSPAASLSSKAATSAISITSSDSECDI. Residues 191–201 are compositionally biased toward polar residues; sequence RLQQQVLSQGS. Thr212 bears the Phosphothreonine mark. The segment covering 219–246 has biased composition (low complexity); the sequence is ATSPAASLSSKAATSAISITSSDSECDI. Ser221, Ser225, Ser227, and Ser228 each carry phosphoserine.

This sequence belongs to the SIX/Sine oculis homeobox family. In terms of assembly, interacts with TLE4 and TLE5. Expressed in the developing and adult retina. Also expressed in the hypothalamic and the pituitary regions.

It is found in the nucleus. May be involved in eye development. The polypeptide is Homeobox protein SIX6 (SIX6) (Homo sapiens (Human)).